A 314-amino-acid chain; its full sequence is Aspartate carbamoyltransferase catalytic subunit (314 aa).

Carbamoyl phosphate is bound by residues Arg58 and Thr59. Residue Lys86 coordinates L-aspartate. Residues Arg108, His136, and Gln139 each coordinate carbamoyl phosphate. The L-aspartate site is built by Arg169 and Arg223. The carbamoyl phosphate site is built by Gly264 and Pro265.

Belongs to the aspartate/ornithine carbamoyltransferase superfamily. ATCase family. In terms of assembly, heterododecamer (2C3:3R2) of six catalytic PyrB chains organized as two trimers (C3), and six regulatory PyrI chains organized as three dimers (R2).

The catalysed reaction is carbamoyl phosphate + L-aspartate = N-carbamoyl-L-aspartate + phosphate + H(+). The protein operates within pyrimidine metabolism; UMP biosynthesis via de novo pathway; (S)-dihydroorotate from bicarbonate: step 2/3. In terms of biological role, catalyzes the condensation of carbamoyl phosphate and aspartate to form carbamoyl aspartate and inorganic phosphate, the committed step in the de novo pyrimidine nucleotide biosynthesis pathway. The sequence is that of Aspartate carbamoyltransferase catalytic subunit from Jannaschia sp. (strain CCS1).